The following is a 642-amino-acid chain: tRNA uridine 5-carboxymethylaminomethyl modification enzyme MnmG (642 aa).

FAD-binding positions include 12–17, Val-124, and Ser-179; that span reads GAGHAG. NAD(+) is bound at residue 272-286; it reads GPRYCPSIEDKITRF. Residue Gln-369 coordinates FAD.

This sequence belongs to the MnmG family. As to quaternary structure, homodimer. Heterotetramer of two MnmE and two MnmG subunits. FAD serves as cofactor.

The protein resides in the cytoplasm. NAD-binding protein involved in the addition of a carboxymethylaminomethyl (cmnm) group at the wobble position (U34) of certain tRNAs, forming tRNA-cmnm(5)s(2)U34. The chain is tRNA uridine 5-carboxymethylaminomethyl modification enzyme MnmG from Bdellovibrio bacteriovorus (strain ATCC 15356 / DSM 50701 / NCIMB 9529 / HD100).